The following is a 293-amino-acid chain: Bifunctional protein FolD 1 (293 aa).

NADP(+) contacts are provided by residues 174 to 176 (GRS) and T240.

It belongs to the tetrahydrofolate dehydrogenase/cyclohydrolase family. Homodimer.

It catalyses the reaction (6R)-5,10-methylene-5,6,7,8-tetrahydrofolate + NADP(+) = (6R)-5,10-methenyltetrahydrofolate + NADPH. The catalysed reaction is (6R)-5,10-methenyltetrahydrofolate + H2O = (6R)-10-formyltetrahydrofolate + H(+). It participates in one-carbon metabolism; tetrahydrofolate interconversion. Catalyzes the oxidation of 5,10-methylenetetrahydrofolate to 5,10-methenyltetrahydrofolate and then the hydrolysis of 5,10-methenyltetrahydrofolate to 10-formyltetrahydrofolate. This Saccharopolyspora erythraea (strain ATCC 11635 / DSM 40517 / JCM 4748 / NBRC 13426 / NCIMB 8594 / NRRL 2338) protein is Bifunctional protein FolD 1.